We begin with the raw amino-acid sequence, 101 residues long: Large ribosomal subunit protein uL23 (101 aa).

It belongs to the universal ribosomal protein uL23 family. As to quaternary structure, part of the 50S ribosomal subunit. Contacts protein L29, and trigger factor when it is bound to the ribosome.

In terms of biological role, one of the early assembly proteins it binds 23S rRNA. One of the proteins that surrounds the polypeptide exit tunnel on the outside of the ribosome. Forms the main docking site for trigger factor binding to the ribosome. This Corynebacterium diphtheriae (strain ATCC 700971 / NCTC 13129 / Biotype gravis) protein is Large ribosomal subunit protein uL23.